Consider the following 426-residue polypeptide: Gamma-glutamyl phosphate reductase (426 aa).

It belongs to the gamma-glutamyl phosphate reductase family.

Its subcellular location is the cytoplasm. It catalyses the reaction L-glutamate 5-semialdehyde + phosphate + NADP(+) = L-glutamyl 5-phosphate + NADPH + H(+). It functions in the pathway amino-acid biosynthesis; L-proline biosynthesis; L-glutamate 5-semialdehyde from L-glutamate: step 2/2. Functionally, catalyzes the NADPH-dependent reduction of L-glutamate 5-phosphate into L-glutamate 5-semialdehyde and phosphate. The product spontaneously undergoes cyclization to form 1-pyrroline-5-carboxylate. This Cupriavidus metallidurans (strain ATCC 43123 / DSM 2839 / NBRC 102507 / CH34) (Ralstonia metallidurans) protein is Gamma-glutamyl phosphate reductase.